Reading from the N-terminus, the 168-residue chain is 6-pyruvoyl tetrahydrobiopterin synthase (168 aa).

Position 19 (histidine 19) interacts with Zn(2+). The active-site Proton acceptor is cysteine 38. The Zn(2+) site is built by histidine 44 and histidine 46. Catalysis depends on charge relay system residues histidine 85 and glutamate 130. A Phosphoserine modification is found at serine 159. Threonine 161 carries the post-translational modification Phosphothreonine. Phosphoserine occurs at positions 164, 165, and 167.

Belongs to the PTPS family. As to quaternary structure, homohexamer formed of two homotrimers in a head to head fashion. It depends on Zn(2+) as a cofactor.

The catalysed reaction is 7,8-dihydroneopterin 3'-triphosphate = 6-pyruvoyl-5,6,7,8-tetrahydropterin + triphosphate + H(+). It participates in cofactor biosynthesis; tetrahydrobiopterin biosynthesis; tetrahydrobiopterin from 7,8-dihydroneopterin triphosphate: step 1/3. Functionally, required for pigment and biopterin synthesis. The protein is 6-pyruvoyl tetrahydrobiopterin synthase (pr) of Drosophila melanogaster (Fruit fly).